We begin with the raw amino-acid sequence, 741 residues long: Catalase-peroxidase (741 aa).

The signal sequence occupies residues 1–21 (MRNFRRFTIALLVLFLGPIGA). Positions 109–231 (WHSAGTYRIS…LAAVQMGLIY (123 aa)) form a cross-link, tryptophyl-tyrosyl-methioninium (Trp-Tyr) (with M-257). Residue His-110 is the Proton acceptor of the active site. The segment at residues 231–257 (YVNPEGPNGNPDPLAAAKDIRETFGRM) is a cross-link (tryptophyl-tyrosyl-methioninium (Tyr-Met) (with W-109)). His-272 serves as a coordination point for heme b.

It belongs to the peroxidase family. Peroxidase/catalase subfamily. Homodimer or homotetramer. Heme b is required as a cofactor. Post-translationally, formation of the three residue Trp-Tyr-Met cross-link is important for the catalase, but not the peroxidase activity of the enzyme.

It carries out the reaction H2O2 + AH2 = A + 2 H2O. The catalysed reaction is 2 H2O2 = O2 + 2 H2O. Its function is as follows. Bifunctional enzyme with both catalase and broad-spectrum peroxidase activity. The protein is Catalase-peroxidase of Leptospira biflexa serovar Patoc (strain Patoc 1 / Ames).